Consider the following 284-residue polypeptide: Bifunctional protein FolD 1 (284 aa).

NADP(+) contacts are provided by residues 166–168 and isoleucine 232; that span reads GAS.

This sequence belongs to the tetrahydrofolate dehydrogenase/cyclohydrolase family. As to quaternary structure, homodimer.

It carries out the reaction (6R)-5,10-methylene-5,6,7,8-tetrahydrofolate + NADP(+) = (6R)-5,10-methenyltetrahydrofolate + NADPH. It catalyses the reaction (6R)-5,10-methenyltetrahydrofolate + H2O = (6R)-10-formyltetrahydrofolate + H(+). Its pathway is one-carbon metabolism; tetrahydrofolate interconversion. Its function is as follows. Catalyzes the oxidation of 5,10-methylenetetrahydrofolate to 5,10-methenyltetrahydrofolate and then the hydrolysis of 5,10-methenyltetrahydrofolate to 10-formyltetrahydrofolate. This chain is Bifunctional protein FolD 1, found in Pseudomonas syringae pv. tomato (strain ATCC BAA-871 / DC3000).